The sequence spans 170 residues: uncharacterized protein (170 aa).

This is an uncharacterized protein from Acidianus bottle-shaped virus (isolate Italy/Pozzuoli) (ABV).